Consider the following 234-residue polypeptide: Staphylococcal superantigen-like 5 (234 aa).

The first 30 residues, 1–30, serve as a signal peptide directing secretion; it reads MKMTAIAKASLALGILATGTITSLHQTVNA.

This sequence belongs to the staphylococcal/streptococcal toxin family. In terms of assembly, interacts with host SELPLG; this interaction prevents SELPLG-mediated neutrophil rolling. Interacts with host MMP9 (via sialic acid-containing O-glycans); this interaction inhibits MMP9 activity. Interacts with host GP1BA and GP6; these interactions play an important role in platelet binding and activation.

In terms of biological role, secreted protein that plays a role in the inhibition of host innate immune system. Modulates the interaction between host SELPLG and P-selectin thereby preventing initial rolling of neutrophils toward the site of infection. Interferes with leukocyte trafficking by inhibiting host metalloproteinase-9/MMP9 activity. Also associates with two different platelet surface receptors GP1A and GP6 leading to platelet activation and aggregation. The sequence is that of Staphylococcal superantigen-like 5 from Staphylococcus aureus (strain NCTC 8325 / PS 47).